Consider the following 282-residue polypeptide: Putative 4-diphosphocytidyl-2-C-methyl-D-erythritol kinase (282 aa).

Residue Lys10 is part of the active site. 94–104 (PICAGLGGGSS) serves as a coordination point for ATP. Residue Asp136 is part of the active site.

Belongs to the GHMP kinase family. IspE subfamily.

The enzyme catalyses 4-CDP-2-C-methyl-D-erythritol + ATP = 4-CDP-2-C-methyl-D-erythritol 2-phosphate + ADP + H(+). In terms of biological role, catalyzes the phosphorylation of the position 2 hydroxy group of 4-diphosphocytidyl-2C-methyl-D-erythritol. The protein is Putative 4-diphosphocytidyl-2-C-methyl-D-erythritol kinase (ipk) of Streptococcus mutans serotype c (strain ATCC 700610 / UA159).